The sequence spans 228 residues: ATP-dependent dethiobiotin synthetase BioD (228 aa).

12-17 (EIGKTT) serves as a coordination point for ATP. Thr16 lines the Mg(2+) pocket. Lys37 is an active-site residue. Ser41 lines the substrate pocket. ATP-binding positions include Asp54, 116-119 (EGAG), and 205-207 (PRL). Positions 54 and 116 each coordinate Mg(2+).

This sequence belongs to the dethiobiotin synthetase family. In terms of assembly, homodimer. It depends on Mg(2+) as a cofactor.

The protein localises to the cytoplasm. It catalyses the reaction (7R,8S)-7,8-diammoniononanoate + CO2 + ATP = (4R,5S)-dethiobiotin + ADP + phosphate + 3 H(+). It functions in the pathway cofactor biosynthesis; biotin biosynthesis; biotin from 7,8-diaminononanoate: step 1/2. Its function is as follows. Catalyzes a mechanistically unusual reaction, the ATP-dependent insertion of CO2 between the N7 and N8 nitrogen atoms of 7,8-diaminopelargonic acid (DAPA, also called 7,8-diammoniononanoate) to form a ureido ring. This chain is ATP-dependent dethiobiotin synthetase BioD, found in Pseudomonas aeruginosa (strain LESB58).